The primary structure comprises 462 residues: Probable peptidoglycan glycosyltransferase FtsW (462 aa).

The disordered stretch occupies residues 1-28 (MREPRHVPQLRASGRRFPQRGRRHRFGK). The Cytoplasmic segment spans residues 1-92 (MREPRHVPQL…RSRMLDFDYS (92 aa)). Positions 13–27 (SGRRFPQRGRRHRFG) are enriched in basic residues. The helical transmembrane segment at 93 to 113 (LLWVSIALLGLGVVMVYSASI) threads the bilayer. Topologically, residues 114 to 127 (AMPDSPKYASYHDY) are periplasmic. A helical transmembrane segment spans residues 128–148 (AFLLRHCVSLVVAFVAAVIAF). Residues 149 to 158 (RVPVSTWDKY) are Cytoplasmic-facing. The chain crosses the membrane as a helical span at residues 159-179 (APHLFLIALVGLVIVLIPHIG). The Periplasmic portion of the chain corresponds to 180-192 (KGVNGARRWIPLG). Residues 193-215 (ITNMQPSEIMKLAVTIYAANYTV) traverse the membrane as a helical segment. The Cytoplasmic portion of the chain corresponds to 216–223 (RKQEYMQS). A helical membrane pass occupies residues 224-244 (FAKGFLPMAFAVGLVGALLLL). Topologically, residues 245-247 (EPD) are periplasmic. The helical transmembrane segment at 248 to 268 (MGAFMVVAAIAMGVLFLGGVN) threads the bilayer. Residues 269-270 (GK) are Cytoplasmic-facing. A helical transmembrane segment spans residues 271–291 (LFGGLVATAVGTFTMLVWLSP). Over 292 to 349 (WRRERIFAYLDPWDERYAQGKAYQLTHSLIAFGRGEWFGVGLGGSVEKLNYLPEAHTD) the chain is Periplasmic. A helical transmembrane segment spans residues 350–370 (FILAVIGEELGFVGVLVVILL). Over 371 to 398 (FYWIVRRSFEIGRQALALDRTFAGLMAK) the chain is Cytoplasmic. The helical transmembrane segment at 399-419 (GVGIWFGAQAFINMGVNLGLL) threads the bilayer. At 420 to 425 (PTKGLT) the chain is on the periplasmic side. A helical membrane pass occupies residues 426 to 446 (LPLVSYGGSGILLNCISLAVL). Residues 447 to 462 (LRVDYENRVLMRGGKV) are Cytoplasmic-facing.

The protein belongs to the SEDS family. FtsW subfamily.

It localises to the cell inner membrane. It carries out the reaction [GlcNAc-(1-&gt;4)-Mur2Ac(oyl-L-Ala-gamma-D-Glu-L-Lys-D-Ala-D-Ala)](n)-di-trans,octa-cis-undecaprenyl diphosphate + beta-D-GlcNAc-(1-&gt;4)-Mur2Ac(oyl-L-Ala-gamma-D-Glu-L-Lys-D-Ala-D-Ala)-di-trans,octa-cis-undecaprenyl diphosphate = [GlcNAc-(1-&gt;4)-Mur2Ac(oyl-L-Ala-gamma-D-Glu-L-Lys-D-Ala-D-Ala)](n+1)-di-trans,octa-cis-undecaprenyl diphosphate + di-trans,octa-cis-undecaprenyl diphosphate + H(+). It functions in the pathway cell wall biogenesis; peptidoglycan biosynthesis. Functionally, peptidoglycan polymerase that is essential for cell division. The polypeptide is Probable peptidoglycan glycosyltransferase FtsW (Burkholderia thailandensis (strain ATCC 700388 / DSM 13276 / CCUG 48851 / CIP 106301 / E264)).